Here is a 222-residue protein sequence, read N- to C-terminus: Peptidyl-prolyl cis-trans isomerase FKBP7 (222 aa).

Positions 1–23 are cleaved as a signal peptide; it reads MPKTMHFLFRFIVFFYLWGLFTA. N-linked (GlcNAc...) asparagine glycosylation is present at asparagine 45. The PPIase FKBP-type domain maps to 53–145; that stretch reads GDLLNAHYDG…IFEIELYAVT (93 aa). 2 consecutive EF-hand domains span residues 145-180 and 189-222; these read TKGP…EFEK and YQDA…HDEL. Ca(2+)-binding residues include aspartate 158, aspartate 160, aspartate 162, glutamine 164, glutamate 169, aspartate 202, aspartate 204, aspartate 206, and glutamate 213. The short motif at 219-222 is the Prevents secretion from ER element; the sequence is HDEL.

In terms of processing, glycosylated.

It localises to the endoplasmic reticulum lumen. It carries out the reaction [protein]-peptidylproline (omega=180) = [protein]-peptidylproline (omega=0). PPIases accelerate the folding of proteins during protein synthesis. This Pongo abelii (Sumatran orangutan) protein is Peptidyl-prolyl cis-trans isomerase FKBP7 (FKBP7).